Here is an 87-residue protein sequence, read N- to C-terminus: ParB-like nuclease domain-containing protein YnaK (87 aa).

This is ParB-like nuclease domain-containing protein YnaK (ynaK) from Escherichia coli (strain K12).